The following is a 404-amino-acid chain: Calcium/calmodulin-dependent protein kinase cmkB (404 aa).

Positions 18–279 (YKTGKTLGAG…AHQALQHPWI (262 aa)) constitute a Protein kinase domain. ATP contacts are provided by residues 24-32 (LGAGLYSVV) and Lys-47. Residue Asp-141 is the Proton acceptor of the active site. The residue at position 179 (Thr-179) is a Phosphothreonine; by cmkC. Residues 279 to 322 (INPPYDTTDDLGSGEDLLPNIKKNFNARRTLHKAIDTVRAINKL) form an autoinhibitory domain region. Positions 301–323 (KNFNARRTLHKAIDTVRAINKLR) are calmodulin-binding. Residues 336-404 (VDPKPEHVNG…WSRTAPRSER (69 aa)) form a disordered region. 2 stretches are compositionally biased toward basic and acidic residues: residues 338–370 (PKPE…DSRS) and 379–389 (QIREQERKVKE).

The protein belongs to the protein kinase superfamily. CAMK Ser/Thr protein kinase family. CaMK subfamily. In terms of processing, phosphorylated by cmkC on Thr-179.

The catalysed reaction is L-seryl-[protein] + ATP = O-phospho-L-seryl-[protein] + ADP + H(+). The enzyme catalyses L-threonyl-[protein] + ATP = O-phospho-L-threonyl-[protein] + ADP + H(+). Activated by Ca(2+)/calmodulin. Binding of calmodulin results in conformational change that relieves intrasteric autoinhibition and allows phosphorylation of Thr-179 within the activation loop by cmkC. Calcium/calmodulin-dependent protein kinase that operates in the calcium-triggered CaMKK-CaMK1 signaling cascade. Required in G1-phase of the cell cycle for proper timing of the initial nuclear division after germination, but not for subsequent mitoses. Required for the normal temporal regulation of nimX activity. This Emericella nidulans (Aspergillus nidulans) protein is Calcium/calmodulin-dependent protein kinase cmkB.